Consider the following 387-residue polypeptide: Patatin group J-1 (387 aa).

The N-terminal stretch at 1-23 is a signal peptide; it reads MATTKSFLILIVMILATTSSTFA. Residues 32–230 enclose the PNPLA domain; that stretch reads LSIDGGGIKG…TVGDPALLSL (199 aa). Positions 36-41 match the GXGXXG motif; the sequence is GGGIKG. Positions 75–79 match the GXSXG motif; it reads GTSTG. Ser-77 acts as the Nucleophile in catalysis. Asn-115 carries N-linked (GlcNAc...) asparagine glycosylation. Catalysis depends on Asp-216, which acts as the Proton acceptor. Positions 216–218 match the DGA/G motif; it reads DGG. The stretch at 322 to 385 forms a coiled coil; that stretch reads ENALTGTTTE…NRKKLRANKA (64 aa).

This sequence belongs to the patatin family. Tuber.

It localises to the vacuole. In terms of biological role, probable lipolytic acyl hydrolase (LAH), an activity which is thought to be involved in the response of tubers to pathogens. In Solanum tuberosum (Potato), this protein is Patatin group J-1.